The sequence spans 182 residues: Urease accessory protein UreE (182 aa).

Positions 128 to 182 are disordered; the sequence is PRTEPFRPEGGAYGHGRTLGHDHGPAQGHGHDHPHVHVHISHKPDEDETPDADPA. Basic and acidic residues predominate over residues 146–162; the sequence is LGHDHGPAQGHGHDHPH. Positions 173–182 are enriched in acidic residues; the sequence is EDETPDADPA.

This sequence belongs to the UreE family.

The protein localises to the cytoplasm. Involved in urease metallocenter assembly. Binds nickel. Probably functions as a nickel donor during metallocenter assembly. This chain is Urease accessory protein UreE, found in Cereibacter sphaeroides (strain ATCC 17023 / DSM 158 / JCM 6121 / CCUG 31486 / LMG 2827 / NBRC 12203 / NCIMB 8253 / ATH 2.4.1.) (Rhodobacter sphaeroides).